The primary structure comprises 47 residues: Putative glycosylation-dependent cell adhesion molecule 1 (47 aa).

Residues 1-18 form the signal peptide; sequence MKFFMVLLPASLASTSLA.

Belongs to the PP3/GlyCAM-1 family. In terms of tissue distribution, expressed in cells harvested from milk of lactating women. Not found in other tissues.

This is Putative glycosylation-dependent cell adhesion molecule 1 (GLYCAM1) from Homo sapiens (Human).